A 48-amino-acid chain; its full sequence is Bacteriocin plantaricin-A (48 aa).

Residues 1 to 25 (MKIQIKGMKQLSNKEMQKIVGGKSS) constitute a propeptide that is removed on maturation.

In terms of assembly, active plantaricin A is composed of an alpha chain and a beta chain.

Its function is as follows. This heat stable bacteriocin inhibits the growth of closely related Lactobacillus species. It may act as a pore-forming protein, creating a channel in the cell membrane through a 'barrel stave' mechanism. The chain is Bacteriocin plantaricin-A (plnA) from Lactiplantibacillus plantarum (strain ATCC BAA-793 / NCIMB 8826 / WCFS1) (Lactobacillus plantarum).